A 687-amino-acid polypeptide reads, in one-letter code: Ferric transport system permease protein FbpB (687 aa).

19 helical membrane passes run 10–30, 50–70, 85–105, 106–126, 141–161, 192–212, 226–246, 271–291, 318–338, 347–367, 378–398, 425–445, 450–472, 484–504, 517–537, 538–558, 594–614, 620–640, and 649–669; these read LFESSHFWILLSLIAFIALPS, GWSSVNLTILWFLPLIGFWLL, LGLISFILLFAFISATIYKVS, MGYSVIVLIATLTALATFAFA, LLSIILLIFFFIVYPTVAIFI, LFLSGFVGIVSTVFGLAFALY, IFSILPIVTPPFVVGLGVTLM, GFNGIAIAQILAFAPISFMIL, YNIIFPLLRPALANSFLIVFI, PLVLGGSFDVIATQIYFYIAG, LGSMLLIFSLLIFIVQYMWIG, IIVMLGFWVVFNFALYGSIFY, VNWGVDYTLTLNNYAMLFGQGLS, IYAGIAAPLTALFGLLIAYIV, FLTMLCFAVPGTVAGVSYILA, FNDAPMYITGTGIIIIISMVM, IWFIVFPLLKPALLSALVTSF, TVSAIVFLVTADTRVATAYIL, and GVAIAYGSILIVVMMAIILFF. The 206-residue stretch at 188–393 folds into the ABC transmembrane type-1 1 domain; sequence ISNSLFLSGF…IFSLLIFIVQ (206 aa). The ABC transmembrane type-1 2 domain occupies 479–669; sequence LINTMIYAGI…VVMMAIILFF (191 aa).

It belongs to the binding-protein-dependent transport system permease family. FbpB subfamily. As to quaternary structure, the complex is composed of two ATP-binding proteins (FbpC), two transmembrane proteins (FbpB) and a solute-binding protein (FbpA).

It localises to the cell inner membrane. Part of the ABC transporter complex FbpABC (TC 3.A.1.10.1) involved in Fe(3+) ions import. Probably responsible for the translocation of the substrate across the membrane. This chain is Ferric transport system permease protein FbpB (fbpB), found in Actinobacillus pleuropneumoniae (Haemophilus pleuropneumoniae).